Consider the following 342-residue polypeptide: Anthranilate phosphoribosyltransferase (342 aa).

Residues Gly-79, 82–83 (GD), Thr-87, 89–92 (NVST), 107–115 (KHGNRSVSS), and Ser-119 contribute to the 5-phospho-alpha-D-ribose 1-diphosphate site. Gly-79 provides a ligand contact to anthranilate. Ser-91 is a Mg(2+) binding site. Asn-110 contacts anthranilate. Arg-165 lines the anthranilate pocket. The Mg(2+) site is built by Asp-223 and Glu-224.

Belongs to the anthranilate phosphoribosyltransferase family. Homodimer. Mg(2+) serves as cofactor.

The catalysed reaction is N-(5-phospho-beta-D-ribosyl)anthranilate + diphosphate = 5-phospho-alpha-D-ribose 1-diphosphate + anthranilate. It functions in the pathway amino-acid biosynthesis; L-tryptophan biosynthesis; L-tryptophan from chorismate: step 2/5. Its function is as follows. Catalyzes the transfer of the phosphoribosyl group of 5-phosphorylribose-1-pyrophosphate (PRPP) to anthranilate to yield N-(5'-phosphoribosyl)-anthranilate (PRA). This Aeromonas hydrophila subsp. hydrophila (strain ATCC 7966 / DSM 30187 / BCRC 13018 / CCUG 14551 / JCM 1027 / KCTC 2358 / NCIMB 9240 / NCTC 8049) protein is Anthranilate phosphoribosyltransferase.